Consider the following 82-residue polypeptide: Small ribosomal subunit protein bS16 (82 aa).

This sequence belongs to the bacterial ribosomal protein bS16 family.

This is Small ribosomal subunit protein bS16 from Crocosphaera subtropica (strain ATCC 51142 / BH68) (Cyanothece sp. (strain ATCC 51142)).